The primary structure comprises 355 residues: Probable NADPH-dependent quinone reductase tdiC (355 aa).

The protein belongs to the zinc-containing alcohol dehydrogenase family. Requires NADPH as cofactor.

The protein operates within secondary metabolite biosynthesis. In terms of biological role, probable NADPH-dependent quinone reductase; part of the gene cluster that mediates the biosynthesis of terrequinone A, an antitumor agent. The first step in the biosynthetic pathway for terrequinone A is formation of indole pyruvic acid (IPA) from L-tryptophan by the aminotransferase tdiD. The nonribosomal peptide synthase tdiA then immediately converts unstable IPA to didemethylasterriquinone D (DDAQ D), via condensation of 2 IPA molecules. The symmetric connectivity of the 2 IPA molecules is thought to arise by head-to-tail dual Claisen condensations facilitated by the TE domain. TdiB then catalyzes reverse prenylation by transferring dimethylallyl diphosphate to carbon atom 2' of DDAQ D, to yield asterriquinone C-1. Finally, tdiC and tdiE enzymes robustly convert asterriquinone C-1 to terrequinone A via a transformation involving regular prenylation at carbon atom 5, which requires elimination of the hydroxy group on C-5. This is Probable NADPH-dependent quinone reductase tdiC from Emericella nidulans (strain FGSC A4 / ATCC 38163 / CBS 112.46 / NRRL 194 / M139) (Aspergillus nidulans).